The following is a 74-amino-acid chain: uncharacterized protein (74 aa).

Residues 25 to 62 (QQTIDRLAGLELRMKQLIRAIEVNNELLRTMQEQQNRV) are a coiled coil.

This is an uncharacterized protein from Bacillus subtilis (strain 168).